We begin with the raw amino-acid sequence, 180 residues long: uncharacterized protein (180 aa).

The N-terminal stretch at methionine 1 to alanine 30 is a signal peptide. The interval glycine 25 to tyrosine 46 is disordered. Low complexity predominate over residues glutamate 29–lysine 39.

It is found in the secreted. This is an uncharacterized protein from Bacillus subtilis (strain 168).